A 186-amino-acid chain; its full sequence is Peptide deformylase (186 aa).

Residues Cys113 and His156 each coordinate Fe cation. Glu157 is an active-site residue. His160 lines the Fe cation pocket.

This sequence belongs to the polypeptide deformylase family. Fe(2+) is required as a cofactor.

It catalyses the reaction N-terminal N-formyl-L-methionyl-[peptide] + H2O = N-terminal L-methionyl-[peptide] + formate. Functionally, removes the formyl group from the N-terminal Met of newly synthesized proteins. Requires at least a dipeptide for an efficient rate of reaction. N-terminal L-methionine is a prerequisite for activity but the enzyme has broad specificity at other positions. This Ligilactobacillus salivarius (strain UCC118) (Lactobacillus salivarius) protein is Peptide deformylase.